Consider the following 195-residue polypeptide: Probable serine/threonine-protein kinase BUD32 homolog (195 aa).

The Protein kinase domain occupies M1–G195. Position 12 (K12) interacts with ATP. The Proton acceptor role is filled by D107.

Belongs to the protein kinase superfamily. Tyr protein kinase family. BUD32 subfamily.

Its subcellular location is the cytoplasm. The enzyme catalyses L-seryl-[protein] + ATP = O-phospho-L-seryl-[protein] + ADP + H(+). It carries out the reaction L-threonyl-[protein] + ATP = O-phospho-L-threonyl-[protein] + ADP + H(+). Functionally, could be involved in the formation of a threonylcarbamoyl group on adenosine at position 37 (t(6)A37) in tRNAs that read codons beginning with adenine. The protein is Probable serine/threonine-protein kinase BUD32 homolog of Archaeoglobus fulgidus (strain ATCC 49558 / DSM 4304 / JCM 9628 / NBRC 100126 / VC-16).